The sequence spans 148 residues: Snaclec 3 (148 aa).

Residues 1 to 23 form the signal peptide; the sequence is MGRFISVSFGLLVVFLSLSGTEA. Cystine bridges form between C27-C38, C55-C144, and C121-C136. The 112-residue stretch at 34-145 folds into the C-type lectin domain; sequence YDQNCYKVFT…CSSTHNFVCK (112 aa).

Belongs to the snaclec family. Heterodimer; disulfide-linked.

It is found in the secreted. Functionally, interferes with one step of hemostasis (modulation of platelet aggregation, or coagulation cascade, for example). The protein is Snaclec 3 of Daboia siamensis (Eastern Russel's viper).